The sequence spans 201 residues: Ras-related protein Rab-9B (201 aa).

Val-18, Gly-19, Lys-20, Ser-21, Ser-22, Asp-33, Ser-34, Ala-36, His-38, and Thr-39 together coordinate GTP. A Mg(2+)-binding site is contributed by Ser-21. The Switch 1 signature appears at 31-42 (KFDSQAFHTIGV). Residue Ser-34 is modified to Phosphoserine. Thr-39 and Asp-62 together coordinate Mg(2+). Positions 64-78 (AGQERFKSLRTPFYR) match the Switch 2 motif. Residues Gly-65, Asn-124, Lys-125, Ala-155, and Lys-156 each contribute to the GTP site. Residues Cys-200 and Cys-201 are each lipidated (S-geranylgeranyl cysteine).

It belongs to the small GTPase superfamily. Rab family. In terms of assembly, interacts (GTP-bound form) with SGSM1; the GDP-bound form has much lower affinity for SGSM1. The GTP-bound form but not the GDP-bound form interacts with HPS4 and the BLOC-3 complex (heterodimer of HPS1 and HPS4) but does not interact with HPS1 alone. Interacts (GTP-bound form) with NDE1. Requires Mg(2+) as cofactor.

Its subcellular location is the cell membrane. The protein resides in the cytoplasmic vesicle. It localises to the phagosome membrane. It carries out the reaction GTP + H2O = GDP + phosphate + H(+). With respect to regulation, regulated by guanine nucleotide exchange factors (GEFs) which promote the exchange of bound GDP for free GTP. Regulated by GTPase activating proteins (GAPs) which increase the GTP hydrolysis activity. Inhibited by GDP dissociation inhibitors (GDIs). Its function is as follows. The small GTPases Rab are key regulators of intracellular membrane trafficking, from the formation of transport vesicles to their fusion with membranes. Rabs cycle between an inactive GDP-bound form and an active GTP-bound form that is able to recruit to membranes different sets of downstream effectors directly responsible for vesicle formation, movement, tethering and fusion. RAB9B is involved in the transport of proteins between the endosomes and the trans Golgi network. May use NDE1/NDEL1 as an effector to interact with the dynein motor complex in order to control retrograde trafficking of RAB9-associated late endosomes to the TGN. The sequence is that of Ras-related protein Rab-9B (RAB9B) from Pongo abelii (Sumatran orangutan).